The sequence spans 140 residues: Organic hydroperoxide resistance protein-like (140 aa).

Belongs to the OsmC/Ohr family.

The sequence is that of Organic hydroperoxide resistance protein-like from Staphylococcus aureus (strain USA300).